Consider the following 1499-residue polypeptide: DNA-directed RNA polymerase subunit beta' (1499 aa).

Residues cysteine 67, cysteine 69, cysteine 82, and cysteine 85 each contribute to the Zn(2+) site. Residues aspartate 497, aspartate 499, and aspartate 501 each coordinate Mg(2+). The Zn(2+) site is built by cysteine 865, cysteine 940, cysteine 947, and cysteine 950. The segment at 1475-1499 (YEPSQRAYQEDEYAKKEDGEIAIDD) is disordered. The segment covering 1482 to 1493 (YQEDEYAKKEDG) has biased composition (basic and acidic residues).

The protein belongs to the RNA polymerase beta' chain family. In terms of assembly, the RNAP catalytic core consists of 2 alpha, 1 beta, 1 beta' and 1 omega subunit. When a sigma factor is associated with the core the holoenzyme is formed, which can initiate transcription. It depends on Mg(2+) as a cofactor. The cofactor is Zn(2+).

The enzyme catalyses RNA(n) + a ribonucleoside 5'-triphosphate = RNA(n+1) + diphosphate. Its function is as follows. DNA-dependent RNA polymerase catalyzes the transcription of DNA into RNA using the four ribonucleoside triphosphates as substrates. This chain is DNA-directed RNA polymerase subunit beta', found in Chloroherpeton thalassium (strain ATCC 35110 / GB-78).